Here is a 313-residue protein sequence, read N- to C-terminus: UbiA prenyltransferase claS (313 aa).

A run of 2 helical transmembrane segments spans residues 30–52 and 57–79; these read FAGT…RALL and TFGT…GCIW. Positions 81–88 match the NDxxDxxxD motif; that stretch reads DILDQDFD. Residues Asp-84 and Asp-88 each coordinate Mg(2+). A run of 3 helical transmembrane segments spans residues 99–121, 131–148, and 155–177; these read IASG…FILM, AWMI…IYPL, and WPQA…YTTG. Asp-205 and Asp-209 together coordinate Mg(2+). Residues 205-209 carry the DxxxD motif; sequence DKKDD. The short motif at 205–209 is the YxxxK element; it reads DKKDD. 3 consecutive transmembrane segments (helical) span residues 227 to 247, 250 to 270, and 293 to 313; these read PVLS…GILN, ELPY…TQLW, and AIVW…GAIM.

The protein belongs to the UbiA prenyltransferase family. It depends on Mg(2+) as a cofactor.

The protein resides in the membrane. The enzyme catalyses hydroquinone + (2E)-geranyl diphosphate = (2E)-geranylhydroquinone + diphosphate. It participates in secondary metabolite biosynthesis; terpenoid biosynthesis. In terms of biological role, prenyltransferase; part of the gene cluster that mediates the biosynthesis of clavilactone A, a meroterpenoid that features a unique benzo-fused ten-membered carbocyclic ring unit with an alpha,beta-epoxy-gamma-lactone moiety, forming an intriguing 10/5/3 tricyclic nested skeleton. ClaR, ClaS and ClaT are sufficient to produce clavilactone A. Within the pathway, claS acts as an atypical UbiA prenyltransferase that transfers geranyl pyrophosphate (GPP) to hydroquinone (HYQ) instead of p-hydroxybenzoic acid (PHB), producing the first intermediate geranylhydroquinone. The cytochrome P450 monooxygenase claR then catalyzes the diradical coupling reaction between the intramolecular hydroquinone and allyl moieties to form the benzo-fused ten-membered carbocyclic ring unit of wigantol. Finally the cytochrome P450 monooxygenase claT exquisitely and stereoselectively assembles the alpha,beta-epoxy-gamma-lactone moiety, producing clavilactone A via arnebinol A. The protein is UbiA prenyltransferase claS of Ampulloclitocybe clavipes (Club foot).